A 156-amino-acid chain; its full sequence is uncharacterized protein (156 aa).

It is found in the mitochondrion. This is an uncharacterized protein from Paramecium tetraurelia.